We begin with the raw amino-acid sequence, 249 residues long: DNA repair protein RecO (249 aa).

It belongs to the RecO family.

Functionally, involved in DNA repair and RecF pathway recombination. This chain is DNA repair protein RecO, found in Exiguobacterium sp. (strain ATCC BAA-1283 / AT1b).